Here is a 381-residue protein sequence, read N- to C-terminus: tRNA pseudouridine synthase D (381 aa).

The Nucleophile role is filled by aspartate 81. The 176-residue stretch at 160–335 (GMPNYFGPQR…TLGSRRFFWV (176 aa)) folds into the TRUD domain.

It belongs to the pseudouridine synthase TruD family.

It carries out the reaction uridine(13) in tRNA = pseudouridine(13) in tRNA. Responsible for synthesis of pseudouridine from uracil-13 in transfer RNAs. This chain is tRNA pseudouridine synthase D, found in Helicobacter pylori (strain Shi470).